The primary structure comprises 462 residues: UDP-N-acetylmuramoylalanine--D-glutamate ligase (462 aa).

112-118 (GTNGKTT) is an ATP binding site.

This sequence belongs to the MurCDEF family.

Its subcellular location is the cytoplasm. It carries out the reaction UDP-N-acetyl-alpha-D-muramoyl-L-alanine + D-glutamate + ATP = UDP-N-acetyl-alpha-D-muramoyl-L-alanyl-D-glutamate + ADP + phosphate + H(+). Its pathway is cell wall biogenesis; peptidoglycan biosynthesis. Functionally, cell wall formation. Catalyzes the addition of glutamate to the nucleotide precursor UDP-N-acetylmuramoyl-L-alanine (UMA). The chain is UDP-N-acetylmuramoylalanine--D-glutamate ligase from Nostoc sp. (strain PCC 7120 / SAG 25.82 / UTEX 2576).